A 379-amino-acid chain; its full sequence is Putative acetyl-CoA C-acetyltransferase VraB (379 aa).

Cys-86 serves as the catalytic Acyl-thioester intermediate. His-338 functions as the Proton acceptor in the catalytic mechanism.

Belongs to the thiolase-like superfamily. Thiolase family.

This chain is Putative acetyl-CoA C-acetyltransferase VraB (vraB), found in Staphylococcus aureus (strain MRSA252).